Reading from the N-terminus, the 344-residue chain is Heat-inducible transcription repressor HrcA (344 aa).

The protein belongs to the HrcA family.

In terms of biological role, negative regulator of class I heat shock genes (grpE-dnaK-dnaJ and groELS operons). Prevents heat-shock induction of these operons. In Anoxybacillus flavithermus (strain DSM 21510 / WK1), this protein is Heat-inducible transcription repressor HrcA.